Reading from the N-terminus, the 230-residue chain is All-trans retinoic acid-induced differentiation factor (230 aa).

The signal sequence occupies residues Met1 to Ser26. Over Gln27–Pro200 the chain is Extracellular. In terms of domain architecture, EGF-like spans Gln152–Met194. 3 disulfides stabilise this stretch: Cys156–Cys172, Cys166–Cys182, and Cys184–Cys193. Residues Leu201–Phe221 form a helical membrane-spanning segment. Residues Thr222 to Thr230 are Cytoplasmic-facing.

Its subcellular location is the nucleus envelope. It localises to the cell membrane. The protein localises to the lysosome membrane. Functionally, involved in osteoblast cell differentiation. May play a role in inducing the cell cycle arrest. This chain is All-trans retinoic acid-induced differentiation factor (atraid), found in Danio rerio (Zebrafish).